Consider the following 412-residue polypeptide: L-cysteine:1D-myo-inositol 2-amino-2-deoxy-alpha-D-glucopyranoside ligase (412 aa).

Residues 1-30 form a disordered region; sequence MQTWSSPSVPKLRGAPRPLRLHDTATGEVR. C43 is a Zn(2+) binding site. L-cysteinyl-5'-AMP-binding positions include 43–46, T58, and 81–83; these read CGIT and NVT. The 'HIGH' region signature appears at 45–55; that stretch reads ITPYDATHLGH. A 'ERGGDP' region motif is present at residues 187–192; sequence ERGGDP. W227 lines the L-cysteinyl-5'-AMP pocket. C231 contacts Zn(2+). 249–251 contributes to the L-cysteinyl-5'-AMP binding site; sequence GSD. Position 256 (H256) interacts with Zn(2+). I283 is a binding site for L-cysteinyl-5'-AMP. The 'KMSKS' region signature appears at 289 to 293; sequence KMSKS.

Belongs to the class-I aminoacyl-tRNA synthetase family. MshC subfamily. As to quaternary structure, monomer. The cofactor is Zn(2+).

It catalyses the reaction 1D-myo-inositol 2-amino-2-deoxy-alpha-D-glucopyranoside + L-cysteine + ATP = 1D-myo-inositol 2-(L-cysteinylamino)-2-deoxy-alpha-D-glucopyranoside + AMP + diphosphate + H(+). Catalyzes the ATP-dependent condensation of GlcN-Ins and L-cysteine to form L-Cys-GlcN-Ins. The polypeptide is L-cysteine:1D-myo-inositol 2-amino-2-deoxy-alpha-D-glucopyranoside ligase (Actinosynnema mirum (strain ATCC 29888 / DSM 43827 / JCM 3225 / NBRC 14064 / NCIMB 13271 / NRRL B-12336 / IMRU 3971 / 101)).